The chain runs to 173 residues: Mesencephalic astrocyte-derived neurotrophic factor homolog (173 aa).

The first 22 residues, 1–22, serve as a signal peptide directing secretion; it reads MKTWYMVVVIGFLATLAQTSLA. 4 disulfides stabilise this stretch: C28/C114, C31/C103, C61/C72, and C148/C151.

This sequence belongs to the ARMET family.

It is found in the secreted. Required during the maturation of the embryonic nervous system for maintenance of neuronal and cuticular connectivity. Essential for maintenance of dopaminergic neurons and dopamine levels. The chain is Mesencephalic astrocyte-derived neurotrophic factor homolog from Drosophila erecta (Fruit fly).